The sequence spans 350 residues: DNA-directed RNA polymerase subunit alpha (350 aa).

Residues 1-226 (MLISQRPTLS…ELFGLARELN (226 aa)) form an alpha N-terminal domain (alpha-NTD) region. Residues 241-350 (ADQAAHFALP…NQDYAETEQL (110 aa)) form an alpha C-terminal domain (alpha-CTD) region. Residues 328–350 (GTWNSDAGYDLEDNQDYAETEQL) form a disordered region. Residues 336–350 (YDLEDNQDYAETEQL) are compositionally biased toward acidic residues.

It belongs to the RNA polymerase alpha chain family. In terms of assembly, homodimer. The RNAP catalytic core consists of 2 alpha, 1 beta, 1 beta' and 1 omega subunit. When a sigma factor is associated with the core the holoenzyme is formed, which can initiate transcription.

The catalysed reaction is RNA(n) + a ribonucleoside 5'-triphosphate = RNA(n+1) + diphosphate. Functionally, DNA-dependent RNA polymerase catalyzes the transcription of DNA into RNA using the four ribonucleoside triphosphates as substrates. In Mycolicibacterium vanbaalenii (strain DSM 7251 / JCM 13017 / BCRC 16820 / KCTC 9966 / NRRL B-24157 / PYR-1) (Mycobacterium vanbaalenii), this protein is DNA-directed RNA polymerase subunit alpha.